The sequence spans 85 residues: Small ribosomal subunit protein bS16 (85 aa).

The protein belongs to the bacterial ribosomal protein bS16 family.

The sequence is that of Small ribosomal subunit protein bS16 from Pseudomonas savastanoi pv. phaseolicola (strain 1448A / Race 6) (Pseudomonas syringae pv. phaseolicola (strain 1448A / Race 6)).